A 723-amino-acid polypeptide reads, in one-letter code: Catalase-peroxidase (723 aa).

The N-terminal stretch at 1–29 (MDGNDLVENKCPVMHGGITVAGHSNTAWW) is a signal peptide. The tryptophyl-tyrosyl-methioninium (Trp-Tyr) (with M-251) cross-link spans 97–225 (WHSAGSYRLA…LAAVQMGLIY (129 aa)). H98 (proton acceptor) is an active-site residue. Positions 225 to 251 (YVNPEGVNGKSDPLKSAAQVRETFARM) form a cross-link, tryptophyl-tyrosyl-methioninium (Tyr-Met) (with W-97). H266 lines the heme b pocket.

This sequence belongs to the peroxidase family. Peroxidase/catalase subfamily. Homodimer or homotetramer. It depends on heme b as a cofactor. Formation of the three residue Trp-Tyr-Met cross-link is important for the catalase, but not the peroxidase activity of the enzyme.

It carries out the reaction H2O2 + AH2 = A + 2 H2O. The catalysed reaction is 2 H2O2 = O2 + 2 H2O. Its function is as follows. Bifunctional enzyme with both catalase and broad-spectrum peroxidase activity. The protein is Catalase-peroxidase of Hyphomonas neptunium (strain ATCC 15444).